The following is a 427-amino-acid chain: Serine hydroxymethyltransferase (427 aa).

Residues L124 and 128-130 (GHL) contribute to the (6S)-5,6,7,8-tetrahydrofolate site. K233 is modified (N6-(pyridoxal phosphate)lysine).

The protein belongs to the SHMT family. As to quaternary structure, homodimer. Pyridoxal 5'-phosphate serves as cofactor.

The protein localises to the cytoplasm. It carries out the reaction (6R)-5,10-methylene-5,6,7,8-tetrahydrofolate + glycine + H2O = (6S)-5,6,7,8-tetrahydrofolate + L-serine. It functions in the pathway one-carbon metabolism; tetrahydrofolate interconversion. Its pathway is amino-acid biosynthesis; glycine biosynthesis; glycine from L-serine: step 1/1. Catalyzes the reversible interconversion of serine and glycine with tetrahydrofolate (THF) serving as the one-carbon carrier. This reaction serves as the major source of one-carbon groups required for the biosynthesis of purines, thymidylate, methionine, and other important biomolecules. Also exhibits THF-independent aldolase activity toward beta-hydroxyamino acids, producing glycine and aldehydes, via a retro-aldol mechanism. The protein is Serine hydroxymethyltransferase of Paracoccus denitrificans (strain Pd 1222).